We begin with the raw amino-acid sequence, 73 residues long: Cell division protein ZapB (73 aa).

Positions 3–69 (LELLSKLETK…EKVTGLVGLL (67 aa)) form a coiled coil. The tract at residues 30-50 (EKQKSSTLSEHNQQLNEQNQQ) is disordered. Residues 41–50 (NQQLNEQNQQ) are compositionally biased toward low complexity.

Belongs to the ZapB family. As to quaternary structure, homodimer. The ends of the coiled-coil dimer bind to each other, forming polymers. Interacts with FtsZ.

The protein resides in the cytoplasm. In terms of biological role, non-essential, abundant cell division factor that is required for proper Z-ring formation. It is recruited early to the divisome by direct interaction with FtsZ, stimulating Z-ring assembly and thereby promoting cell division earlier in the cell cycle. Its recruitment to the Z-ring requires functional FtsA or ZipA. This Shewanella putrefaciens (strain CN-32 / ATCC BAA-453) protein is Cell division protein ZapB.